The sequence spans 194 residues: Fe/S biogenesis protein NfuA (194 aa).

[4Fe-4S] cluster is bound by residues C151 and C154.

The protein belongs to the NfuA family. As to quaternary structure, homodimer. [4Fe-4S] cluster is required as a cofactor.

Involved in iron-sulfur cluster biogenesis. Binds a 4Fe-4S cluster, can transfer this cluster to apoproteins, and thereby intervenes in the maturation of Fe/S proteins. Could also act as a scaffold/chaperone for damaged Fe/S proteins. This Actinobacillus succinogenes (strain ATCC 55618 / DSM 22257 / CCUG 43843 / 130Z) protein is Fe/S biogenesis protein NfuA.